The following is a 227-amino-acid chain: PKHD-type hydroxylase Mnod_1077 (227 aa).

The region spanning 78–178 is the Fe2OG dioxygenase domain; the sequence is RVLPPLFNRY…RWSAFFWSQS (101 aa). Fe cation is bound by residues His-96, Asp-98, and His-159. Arg-169 provides a ligand contact to 2-oxoglutarate.

Fe(2+) is required as a cofactor. It depends on L-ascorbate as a cofactor.

This is PKHD-type hydroxylase Mnod_1077 from Methylobacterium nodulans (strain LMG 21967 / CNCM I-2342 / ORS 2060).